Here is a 29-residue protein sequence, read N- to C-terminus: Cyclotide mela-7 (29 aa).

The segment at residues 1–29 (GLPTCGETCFKGKCYTPGCSCSYPICKKN) is a cross-link (cyclopeptide (Gly-Asn)). 3 disulfides stabilise this stretch: Cys-5–Cys-19, Cys-9–Cys-21, and Cys-14–Cys-26.

Post-translationally, this is a cyclic peptide. Contains 3 disulfide bonds.

Probably participates in a plant defense mechanism (Potential). Binds to and induces leakage in phospholipd membranes, particularly ones containing 1-palmitoyl-2-oleophosphatidylethanolamine (POPE). In vitro, displays cytotoxicity against cultured cells but no hemolytic activity towards fresh erythrocytes. Not active against Gram-negative bacterium E.coli ATCC 25922 or Gram-positive bacterium S.aureus ATCC 25923 up to a concentration of 64 uM. This chain is Cyclotide mela-7, found in Melicytus latifolius (Norfolk Island mahoe).